The primary structure comprises 511 residues: Acidic amino acid decarboxylase GADL1 (511 aa).

Residue Lys-323 is modified to N6-(pyridoxal phosphate)lysine.

The protein belongs to the group II decarboxylase family. Homodimer. Pyridoxal 5'-phosphate serves as cofactor.

The catalysed reaction is L-aspartate + H(+) = beta-alanine + CO2. It catalyses the reaction 3-sulfino-L-alanine + H(+) = hypotaurine + CO2. Functionally, catalyzes the decarboxylation of L-aspartate, 3-sulfino-L-alanine (cysteine sulfinic acid), and L-cysteate to beta-alanine, hypotaurine and taurine, respectively. The preferred substrate is L-aspartate. Does not exhibit any decarboxylation activity toward glutamate. The protein is Acidic amino acid decarboxylase GADL1 (gadl1) of Xenopus tropicalis (Western clawed frog).